The following is a 222-amino-acid chain: Charged multivesicular body protein 3 (222 aa).

Gly2 is lipidated: N-myristoyl glycine. The tract at residues Gly2–Ala113 is intramolecular interaction with C-terminus. Residues Lys22–Lys54 are a coiled coil. 2 important for autoinhibitory function regions span residues Val59 to Ala64 and Ile168 to Leu169. The stretch at Glu141 to Ser222 forms a coiled coil. Residues Met151–Leu220 form an intramolecular interaction with N-terminus region. The segment at Met151–Ser222 is interaction with VPS4A. Residue Lys179 forms a Glycyl lysine isopeptide (Lys-Gly) (interchain with G-Cter in ubiquitin) linkage. The disordered stretch occupies residues Ala180–Ser222. Interaction with STAMBP stretches follow at residues Ala196–Ser222, Glu203–Glu207, and Arg221–Ser222. Ser200 bears the Phosphoserine mark. Residues Ser200–Leu210 are compositionally biased toward acidic residues. An MIT-interacting motif motif is present at residues Glu201–Glu211.

Belongs to the SNF7 family. As to quaternary structure, probable core component of the endosomal sorting required for transport complex III (ESCRT-III). ESCRT-III components are thought to multimerize to form a flat lattice on the perimeter membrane of the endosome. Several assembly forms of ESCRT-III may exist that interact and act sequentially. Forms a metastable monomer in solution; its core structure (without part of the putative autoinhibitory C-terminal acidic region) oligomerizes into a flat lattice via two different dimerization interfaces. In vitro, heteromerizes with CHMP2A (but not CHMP4) to form helical tubular structures that expose membrane-interacting sites on the outside whereas VPS4B can associate on the inside of the tubule. May interact with IGFBP7; the relevance of such interaction however remains unclear. Interacts with CHMP2A. Interacts with CHMP4A; the interaction requires the release of CHMP4A autoinhibition. Interacts with VPS4A. Interacts with STAMBP; the interaction appears to relieve the autoinhibition of CHMP3. Interacts with VTA1.

The protein localises to the cytoplasm. It is found in the cytosol. The protein resides in the membrane. Its subcellular location is the endosome. It localises to the late endosome membrane. Its function is as follows. Probable core component of the endosomal sorting required for transport complex III (ESCRT-III) which is involved in multivesicular bodies (MVBs) formation and sorting of endosomal cargo proteins into MVBs. MVBs contain intraluminal vesicles (ILVs) that are generated by invagination and scission from the limiting membrane of the endosome and mostly are delivered to lysosomes enabling degradation of membrane proteins, such as stimulated growth factor receptors, lysosomal enzymes and lipids. The MVB pathway appears to require the sequential function of ESCRT-O, -I,-II and -III complexes. ESCRT-III proteins mostly dissociate from the invaginating membrane before the ILV is released. The ESCRT machinery also functions in topologically equivalent membrane fission events, such as the terminal stages of cytokinesis and the budding of enveloped viruses (lentiviruses). ESCRT-III proteins are believed to mediate the necessary vesicle extrusion and/or membrane fission activities, possibly in conjunction with the AAA ATPase VPS4. Selectively binds to phosphatidylinositol 3,5-bisphosphate PtdIns(3,5)P2 and PtdIns(3,4)P2 in preference to other phosphoinositides tested. Involved in late stages of cytokinesis. Plays a role in endosomal sorting/trafficking of EGF receptor. The polypeptide is Charged multivesicular body protein 3 (CHMP3) (Pongo abelii (Sumatran orangutan)).